The primary structure comprises 417 residues: NADH-quinone oxidoreductase subunit D (417 aa).

It belongs to the complex I 49 kDa subunit family. In terms of assembly, NDH-1 is composed of 14 different subunits. Subunits NuoB, C, D, E, F, and G constitute the peripheral sector of the complex.

Its subcellular location is the cell inner membrane. It carries out the reaction a quinone + NADH + 5 H(+)(in) = a quinol + NAD(+) + 4 H(+)(out). Its function is as follows. NDH-1 shuttles electrons from NADH, via FMN and iron-sulfur (Fe-S) centers, to quinones in the respiratory chain. The immediate electron acceptor for the enzyme in this species is believed to be ubiquinone. Couples the redox reaction to proton translocation (for every two electrons transferred, four hydrogen ions are translocated across the cytoplasmic membrane), and thus conserves the redox energy in a proton gradient. The protein is NADH-quinone oxidoreductase subunit D of Chromobacterium violaceum (strain ATCC 12472 / DSM 30191 / JCM 1249 / CCUG 213 / NBRC 12614 / NCIMB 9131 / NCTC 9757 / MK).